The chain runs to 120 residues: uncharacterized protein (120 aa).

Residues Q4–E120 form the VOC domain.

This is an uncharacterized protein from Bacillus subtilis (strain 168).